Consider the following 530-residue polypeptide: Arginine--tRNA ligase (530 aa).

The 'HIGH' region signature appears at 113-123 (ANPTGPLHIGH).

The protein belongs to the class-I aminoacyl-tRNA synthetase family. Monomer.

It is found in the cytoplasm. The enzyme catalyses tRNA(Arg) + L-arginine + ATP = L-arginyl-tRNA(Arg) + AMP + diphosphate. In Campylobacter jejuni subsp. jejuni serotype O:2 (strain ATCC 700819 / NCTC 11168), this protein is Arginine--tRNA ligase.